The primary structure comprises 147 residues: Hemoglobin subunit epsilon (147 aa).

The Globin domain maps to 3-147 (HWSAEEKQLI…VAHALARKYH (145 aa)). Heme b contacts are provided by His-64 and His-93.

This sequence belongs to the globin family. As to quaternary structure, heterotetramer of two epsilon chains and two alpha chains. Hemoglobin E (Hbe) contains a alpha-A chains while hemoglobin M (Hbm) contains alpha-D chains.

Functionally, beta-type chain found in early embryos. The protein is Hemoglobin subunit epsilon (HBE) of Gallus gallus (Chicken).